We begin with the raw amino-acid sequence, 318 residues long: Cobalamin biosynthesis protein CobD (318 aa).

Helical transmembrane passes span 56–76 (VLWLLVVGITWLVSWGFLWLM), 78–98 (EINPWLGWLAQVWMIYTLLAG), 153–173 (VDGVIAPLFFLMLGGAPLAMA), 204–224 (LANWLPARLSWVLLSAAAWLI), and 298–318 (MMASLLALLLFALTHLLLVGI).

The protein belongs to the CobD/CbiB family.

Its subcellular location is the cell membrane. The protein operates within cofactor biosynthesis; adenosylcobalamin biosynthesis. Its function is as follows. Converts cobyric acid to cobinamide by the addition of aminopropanol on the F carboxylic group. This chain is Cobalamin biosynthesis protein CobD, found in Yersinia enterocolitica serotype O:8 / biotype 1B (strain NCTC 13174 / 8081).